The chain runs to 243 residues: Uridylate kinase (243 aa).

18–21 (KLGG) serves as a coordination point for ATP. Gly-59 provides a ligand contact to UMP. ATP-binding residues include Gly-60 and Arg-64. Residues Asp-79 and 140–147 (MGMPYFST) contribute to the UMP site. ATP contacts are provided by Tyr-173 and Asp-176.

This sequence belongs to the UMP kinase family. Homohexamer.

Its subcellular location is the cytoplasm. The enzyme catalyses UMP + ATP = UDP + ADP. The protein operates within pyrimidine metabolism; CTP biosynthesis via de novo pathway; UDP from UMP (UMPK route): step 1/1. Its activity is regulated as follows. Inhibited by UTP. Catalyzes the reversible phosphorylation of UMP to UDP. This chain is Uridylate kinase, found in Corynebacterium diphtheriae (strain ATCC 700971 / NCTC 13129 / Biotype gravis).